The sequence spans 567 residues: Proline--tRNA ligase (567 aa).

It belongs to the class-II aminoacyl-tRNA synthetase family. ProS type 1 subfamily. In terms of assembly, homodimer.

The protein localises to the cytoplasm. It catalyses the reaction tRNA(Pro) + L-proline + ATP = L-prolyl-tRNA(Pro) + AMP + diphosphate. Its function is as follows. Catalyzes the attachment of proline to tRNA(Pro) in a two-step reaction: proline is first activated by ATP to form Pro-AMP and then transferred to the acceptor end of tRNA(Pro). As ProRS can inadvertently accommodate and process non-cognate amino acids such as alanine and cysteine, to avoid such errors it has two additional distinct editing activities against alanine. One activity is designated as 'pretransfer' editing and involves the tRNA(Pro)-independent hydrolysis of activated Ala-AMP. The other activity is designated 'posttransfer' editing and involves deacylation of mischarged Ala-tRNA(Pro). The misacylated Cys-tRNA(Pro) is not edited by ProRS. This is Proline--tRNA ligase from Geobacillus sp. (strain WCH70).